Reading from the N-terminus, the 346-residue chain is F(420)H(2) dehydrogenase subunit F (346 aa).

2 4Fe-4S ferredoxin-type domains span residues 5-34 and 46-76; these read IAEVIQHDVCAACGACEAVCPIGAVTVKKA and YEKGAAFQVCEGCLTCSRICPVVDGFIENEL. [4Fe-4S] cluster is bound by residues Cys-14, Cys-17, Cys-20, Cys-24, Cys-55, Cys-58, Cys-61, and Cys-65.

The FPO complex is composed of at least 13 different subunits. [4Fe-4S] cluster serves as cofactor. FAD is required as a cofactor.

Its subcellular location is the membrane. It is found in the cytoplasm. The enzyme catalyses methanophenazine + reduced coenzyme F420-(gamma-L-Glu)(n) = dihydromethanophenazine + oxidized coenzyme F420-(gamma-L-Glu)(n) + H(+). It catalyses the reaction reduced coenzyme F420-(gamma-L-Glu)(n) + 2 oxidized [2Fe-2S]-[ferredoxin] = oxidized coenzyme F420-(gamma-L-Glu)(n) + 2 reduced [2Fe-2S]-[ferredoxin] + 3 H(+). Component of the F(420)H(2) dehydrogenase (FPO complex) which is part of the energy-conserving F(420)H(2):heterodisulfide oxidoreductase system. The membrane-bound electron transfer system of the complex plays an important role in the metabolism of methylotrophic methanogens when the organisms grow on methanol or methylamines. Catalyzes the oxidation of methanophenazine to dihydromethanophenazine. It shuttles electrons from F(420)H(2), via FAD and iron-sulfur (Fe-S) centers, to methanophenazine (an electron carrier in the membrane). It couples the redox reaction to proton translocation (for every two electrons transferred, two hydrogen ions are translocated across the cytoplasmic membrane), and thus conserves the redox energy in a proton gradient. It also catalyzes the oxidation of F(420)H(2) with quinones such as 2,3-dimethyl-1,4-naphthoquinone, 2-methyl-1,4-naphthoquinone and tetramethyl-p-benzoquinone. Might have a dual function, acting as an electron input module when connected to the membrane integral Fpo complex, or as a soluble single subunit, being involved in the reoxydation of reduced ferredoxin in the cytoplasm. The protein is F(420)H(2) dehydrogenase subunit F (fpoF) of Methanosarcina mazei (strain ATCC BAA-159 / DSM 3647 / Goe1 / Go1 / JCM 11833 / OCM 88) (Methanosarcina frisia).